Reading from the N-terminus, the 209-residue chain is Small ribosomal subunit protein uS4 (209 aa).

Positions 98-161 constitute an S4 RNA-binding domain; the sequence is ARLDNVVYRM…RDLEVIKKAV (64 aa).

This sequence belongs to the universal ribosomal protein uS4 family. Part of the 30S ribosomal subunit. Contacts protein S5. The interaction surface between S4 and S5 is involved in control of translational fidelity.

Its function is as follows. One of the primary rRNA binding proteins, it binds directly to 16S rRNA where it nucleates assembly of the body of the 30S subunit. With S5 and S12 plays an important role in translational accuracy. This is Small ribosomal subunit protein uS4 from Thermotoga petrophila (strain ATCC BAA-488 / DSM 13995 / JCM 10881 / RKU-1).